The sequence spans 274 residues: Cytochrome b-c1 complex subunit Rieske, mitochondrial (274 aa).

At 79–103 (SHTDIKVPDFSDYRRSEVLDTTKSS) the chain is on the mitochondrial matrix side. Residues 104-140 (RESSDARKGFSYLVTATTAVGVTYAAKSIVTQFVSSM) form a helical membrane-spanning segment. Residues 141–274 (SASADVLAMS…FTSDDLVIVG (134 aa)) lie on the Mitochondrial intermembrane side of the membrane. Positions 187–272 (EAAVELSQLR…YEFTSDDLVI (86 aa)) constitute a Rieske domain. The [2Fe-2S] cluster site is built by Cys-217, His-219, Cys-236, His-239, and Ser-241. Cys-222 and Cys-238 are oxidised to a cystine.

Belongs to the Rieske iron-sulfur protein family. In terms of assembly, component of the ubiquinol-cytochrome c oxidoreductase (cytochrome b-c1 complex, complex III, CIII), a multisubunit enzyme composed of 11 subunits. The complex is composed of 3 respiratory subunits cytochrome b, cytochrome c1 and Rieske protein UQCRFS1, 2 core protein subunits UQCRC1/QCR1 and UQCRC2/QCR2, and 6 low-molecular weight protein subunits UQCRH/QCR6, UQCRB/QCR7, UQCRQ/QCR8, UQCR10/QCR9, UQCR11/QCR10 and subunit 9, the cleavage product of Rieske protein UQCRFS1. The complex exists as an obligatory dimer and forms supercomplexes (SCs) in the inner mitochondrial membrane with NADH-ubiquinone oxidoreductase (complex I, CI) and cytochrome c oxidase (complex IV, CIV), resulting in different assemblies (supercomplex SCI(1)III(2)IV(1) and megacomplex MCI(2)III(2)IV(2)). Incorporation of the Rieske protein UQCRFS1 is the penultimate step in complex III assembly. Interacts with TTC19, which is involved in the clearance of UQCRFS1 fragments. Component of the ubiquinol-cytochrome c oxidoreductase (cytochrome b-c1 complex, complex III, CIII). Subunit 9 corresponds to the mitochondrial targeting sequence (MTS) of Rieske protein UQCRFS1. It is retained after processing and incorporated inside complex III, where it remains bound to the complex and localizes between the 2 core subunits UQCRC1/QCR1 and UQCRC2/QCR2. [2Fe-2S] cluster is required as a cofactor. Proteolytic processing is necessary for the correct insertion of UQCRFS1 in the complex III dimer. Several fragments are generated during UQCRFS1 insertion, most probably due to the endogenous matrix-processing peptidase (MPP) activity of the 2 core protein subunits UQCRC1/QCR1 and UQCRC2/QCR2, which are homologous to the 2 mitochondrial-processing peptidase (MPP) subunits beta-MPP and alpha-MPP respectively. The action of the protease is also necessary for the clearance of the UQCRFS1 fragments.

It localises to the mitochondrion inner membrane. The enzyme catalyses a quinol + 2 Fe(III)-[cytochrome c](out) = a quinone + 2 Fe(II)-[cytochrome c](out) + 2 H(+)(out). Component of the ubiquinol-cytochrome c oxidoreductase, a multisubunit transmembrane complex that is part of the mitochondrial electron transport chain which drives oxidative phosphorylation. The respiratory chain contains 3 multisubunit complexes succinate dehydrogenase (complex II, CII), ubiquinol-cytochrome c oxidoreductase (cytochrome b-c1 complex, complex III, CIII) and cytochrome c oxidase (complex IV, CIV), that cooperate to transfer electrons derived from NADH and succinate to molecular oxygen, creating an electrochemical gradient over the inner membrane that drives transmembrane transport and the ATP synthase. The cytochrome b-c1 complex catalyzes electron transfer from ubiquinol to cytochrome c, linking this redox reaction to translocation of protons across the mitochondrial inner membrane, with protons being carried across the membrane as hydrogens on the quinol. In the process called Q cycle, 2 protons are consumed from the matrix, 4 protons are released into the intermembrane space and 2 electrons are passed to cytochrome c. The Rieske protein is a catalytic core subunit containing a [2Fe-2S] iron-sulfur cluster. It cycles between 2 conformational states during catalysis to transfer electrons from the quinol bound in the Q(0) site in cytochrome b to cytochrome c1. Incorporation of UQCRFS1 is the penultimate step in complex III assembly. Its function is as follows. Component of the ubiquinol-cytochrome c oxidoreductase (cytochrome b-c1 complex, complex III, CIII). UQCRFS1 undergoes proteolytic processing once it is incorporated in the complex III dimer. One of the fragments, called subunit 9, corresponds to its mitochondrial targeting sequence (MTS). The proteolytic processing is necessary for the correct insertion of UQCRFS1 in the complex III dimer, but the persistence of UQCRFS1-derived fragments may prevent newly imported UQCRFS1 to be processed and assembled into complex III and is detrimental for the complex III structure and function. This is Cytochrome b-c1 complex subunit Rieske, mitochondrial (UQCRFS1) from Aotus azarae (Azara's night monkey).